A 114-amino-acid chain; its full sequence is Ribosome-binding factor A (114 aa).

The protein belongs to the RbfA family. As to quaternary structure, monomer. Binds 30S ribosomal subunits, but not 50S ribosomal subunits or 70S ribosomes.

The protein resides in the cytoplasm. Its function is as follows. One of several proteins that assist in the late maturation steps of the functional core of the 30S ribosomal subunit. Associates with free 30S ribosomal subunits (but not with 30S subunits that are part of 70S ribosomes or polysomes). Required for efficient processing of 16S rRNA. May interact with the 5'-terminal helix region of 16S rRNA. This Listeria innocua serovar 6a (strain ATCC BAA-680 / CLIP 11262) protein is Ribosome-binding factor A.